A 223-amino-acid polypeptide reads, in one-letter code: Immediate early response gene 2 protein (223 aa).

Methionine 1 carries the N-acetylmethionine modification. The interval 63–172 (AALPSDPRLH…PPAQAEGAFP (110 aa)) is disordered. Positions 69 to 78 (PRLHPPREAE) are enriched in basic and acidic residues. A compositionally biased stretch (low complexity) spans 125-138 (SSLSDGGDAGLVPS).

Belongs to the IER family. Expressed in activated T-cells (at protein level). Expression increases in metastatic tumor cells (at protein level).

It is found in the cytoplasm. It localises to the nucleus. In terms of biological role, DNA-binding protein that seems to act as a transcription factor. Involved in the regulation of neuronal differentiation, acts upon JNK-signaling pathway activation and plays a role in neurite outgrowth in hippocampal cells. May mediate with FIBP FGF-signaling in the establishment of laterality in the embryo. Promotes cell motility, seems to stimulate tumor metastasis. The chain is Immediate early response gene 2 protein from Homo sapiens (Human).